We begin with the raw amino-acid sequence, 331 residues long: Minor capsid protein A1 (331 aa).

The protein localises to the virion. In terms of biological role, minor capsid protein. The sequence is that of Minor capsid protein A1 from Escherichia coli (Bacteriophage SP).